The following is a 101-amino-acid chain: Small ribosomal subunit protein uS10 (101 aa).

The protein belongs to the universal ribosomal protein uS10 family. Part of the 30S ribosomal subunit.

Involved in the binding of tRNA to the ribosomes. The chain is Small ribosomal subunit protein uS10 from Rhodococcus erythropolis (strain PR4 / NBRC 100887).